A 289-amino-acid polypeptide reads, in one-letter code: ADP-polyphosphate phosphotransferase (289 aa).

Belongs to the polyphosphate kinase 2 (PPK2) family. Class I subfamily.

It carries out the reaction [phosphate](n) + ATP = [phosphate](n+1) + ADP. Its function is as follows. Uses inorganic polyphosphate (polyP) as a donor to convert ADP to ATP. The chain is ADP-polyphosphate phosphotransferase from Rhodopseudomonas palustris (strain ATCC BAA-98 / CGA009).